The primary structure comprises 629 residues: tRNA uridine 5-carboxymethylaminomethyl modification enzyme MnmG (629 aa).

FAD is bound by residues 13–18 (GGGHAG), Val-125, and Ser-180. Residue 273 to 287 (GPRYCPSIEDKVMRF) coordinates NAD(+). FAD is bound at residue Gln-370.

The protein belongs to the MnmG family. In terms of assembly, homodimer. Heterotetramer of two MnmE and two MnmG subunits. The cofactor is FAD.

The protein localises to the cytoplasm. Functionally, NAD-binding protein involved in the addition of a carboxymethylaminomethyl (cmnm) group at the wobble position (U34) of certain tRNAs, forming tRNA-cmnm(5)s(2)U34. This chain is tRNA uridine 5-carboxymethylaminomethyl modification enzyme MnmG, found in Escherichia coli O157:H7.